We begin with the raw amino-acid sequence, 221 residues long: MVTELRVFYLVPLLLASYVQTTPRPEKMKMDCYKDVKGTIYDYEALSLNGKEHIPFKQYAGKHVLFVNVATYCGLTIQYPELNALQEDLKPFGLVILGFPCNQFGKQEPGDNLEILPGLKYVRPGKGFLPNFQLFAKGDVNGENEQKIFTFLKRSCPHPSETVVMSKHTFWEPIKVHDIRWNFEKFLVGPDGIPVMRWFHQAPVSTVKSDIMAYLSHFKTI.

The first 21 residues, 1-21 (MVTELRVFYLVPLLLASYVQT), serve as a signal peptide directing secretion. Cys73 is an active-site residue.

The protein belongs to the glutathione peroxidase family. Epididymis.

Its subcellular location is the secreted. The enzyme catalyses 2 glutathione + H2O2 = glutathione disulfide + 2 H2O. Functionally, protects cells and enzymes from oxidative damage, by catalyzing the reduction of hydrogen peroxide, lipid peroxides and organic hydroperoxide, by glutathione. May constitute a glutathione peroxidase-like protective system against peroxide damage in sperm membrane lipids. In Mus musculus (Mouse), this protein is Epididymal secretory glutathione peroxidase (Gpx5).